A 425-amino-acid chain; its full sequence is Ribosomal protein uS12 methylthiotransferase RimO (425 aa).

One can recognise an MTTase N-terminal domain in the interval 2-115 (KNFTVITLGC…IIDYIKQFSK (114 aa)). Positions 11, 47, 78, 142, 146, and 149 each coordinate [4Fe-4S] cluster. The Radical SAM core domain maps to 128–357 (VEPPSYRYIK…MARQAVISLE (230 aa)). One can recognise a TRAM domain in the interval 360–425 (RALIGKKYEA…YEYDVKGVIV (66 aa)).

It belongs to the methylthiotransferase family. RimO subfamily. [4Fe-4S] cluster is required as a cofactor.

Its subcellular location is the cytoplasm. The enzyme catalyses L-aspartate(89)-[ribosomal protein uS12]-hydrogen + (sulfur carrier)-SH + AH2 + 2 S-adenosyl-L-methionine = 3-methylsulfanyl-L-aspartate(89)-[ribosomal protein uS12]-hydrogen + (sulfur carrier)-H + 5'-deoxyadenosine + L-methionine + A + S-adenosyl-L-homocysteine + 2 H(+). Its function is as follows. Catalyzes the methylthiolation of an aspartic acid residue of ribosomal protein uS12. The sequence is that of Ribosomal protein uS12 methylthiotransferase RimO from Thermodesulfovibrio yellowstonii (strain ATCC 51303 / DSM 11347 / YP87).